The primary structure comprises 610 residues: Glutamine--fructose-6-phosphate aminotransferase [isomerizing] (610 aa).

Cysteine 2 acts as the Nucleophile; for GATase activity in catalysis. Residues 2-219 (CGIVGYAGKK…SGEWGYFSQN (218 aa)) enclose the Glutamine amidotransferase type-2 domain. 2 consecutive SIS domains span residues 287–431 (SKDV…SDEE) and 459–600 (MSSH…PDQP). Lysine 605 functions as the For Fru-6P isomerization activity in the catalytic mechanism.

In terms of assembly, homodimer.

It localises to the cytoplasm. It carries out the reaction D-fructose 6-phosphate + L-glutamine = D-glucosamine 6-phosphate + L-glutamate. In terms of biological role, catalyzes the first step in hexosamine metabolism, converting fructose-6P into glucosamine-6P using glutamine as a nitrogen source. The polypeptide is Glutamine--fructose-6-phosphate aminotransferase [isomerizing] (Leptospira interrogans serogroup Icterohaemorrhagiae serovar copenhageni (strain Fiocruz L1-130)).